A 123-amino-acid polypeptide reads, in one-letter code: Transmembrane protein 254 (123 aa).

3 helical membrane-spanning segments follow: residues 15-35 (LFWFTVITVSFGYYTWAVFWP), 63-83 (NGYWLAWLIHVGESLYALVLC), and 95-115 (LLWFLQTFLFGVASLSILIAY).

The protein resides in the membrane. The protein is Transmembrane protein 254 of Mus musculus (Mouse).